Here is a 217-residue protein sequence, read N- to C-terminus: 3,4-dihydroxy-2-butanone 4-phosphate synthase (217 aa).

Residues 37–38, Asp-42, 150–154, and Glu-174 contribute to the D-ribulose 5-phosphate site; these read RE and RRGHT. Glu-38 serves as a coordination point for Mg(2+). Position 153 (His-153) interacts with Mg(2+).

Belongs to the DHBP synthase family. In terms of assembly, homodimer. Requires Mg(2+) as cofactor. It depends on Mn(2+) as a cofactor.

It catalyses the reaction D-ribulose 5-phosphate = (2S)-2-hydroxy-3-oxobutyl phosphate + formate + H(+). It functions in the pathway cofactor biosynthesis; riboflavin biosynthesis; 2-hydroxy-3-oxobutyl phosphate from D-ribulose 5-phosphate: step 1/1. Functionally, catalyzes the conversion of D-ribulose 5-phosphate to formate and 3,4-dihydroxy-2-butanone 4-phosphate. The sequence is that of 3,4-dihydroxy-2-butanone 4-phosphate synthase from Serratia proteamaculans (strain 568).